The following is a 301-amino-acid chain: Glycine--tRNA ligase alpha subunit (301 aa).

It belongs to the class-II aminoacyl-tRNA synthetase family. As to quaternary structure, tetramer of two alpha and two beta subunits.

It is found in the cytoplasm. The enzyme catalyses tRNA(Gly) + glycine + ATP = glycyl-tRNA(Gly) + AMP + diphosphate. The sequence is that of Glycine--tRNA ligase alpha subunit from Proteus mirabilis (strain HI4320).